We begin with the raw amino-acid sequence, 202 residues long: Small ribosomal subunit protein uS4c (202 aa).

Residues 90–152 enclose the S4 RNA-binding domain; it reads MRLDNVIFRL…RKSESIINKN (63 aa).

This sequence belongs to the universal ribosomal protein uS4 family. As to quaternary structure, part of the 30S ribosomal subunit. Contacts protein S5. The interaction surface between S4 and S5 is involved in control of translational fidelity.

The protein resides in the plastid. Its subcellular location is the chloroplast. Its function is as follows. One of the primary rRNA binding proteins, it binds directly to 16S rRNA where it nucleates assembly of the body of the 30S subunit. In terms of biological role, with S5 and S12 plays an important role in translational accuracy. The sequence is that of Small ribosomal subunit protein uS4c (rps4) from Dendrohypopterygium filiculiforme (Moss).